Reading from the N-terminus, the 203-residue chain is MSRYTGPSWKQSRRLGLSLTGTGKELARRNYVPGQHGPNNRSKLSEYGLQLAEKQKLRFSYGLGEKQFRNLVVQATKIKEGTLGFNFMVLLERRLDNVVYRLGLATTRRQARQFVNHGHILVDGKRVDIPSYRVDPGQVISVREKSMKVPAILEAVEATLGRPAFVSFDAEKLKGSLTRLPERDEINPEINEALVVEFYNKML.

The S4 RNA-binding domain maps to 93-156; that stretch reads RRLDNVVYRL…MKVPAILEAV (64 aa).

This sequence belongs to the universal ribosomal protein uS4 family. As to quaternary structure, part of the 30S ribosomal subunit. Contacts protein S5. The interaction surface between S4 and S5 is involved in control of translational fidelity.

One of the primary rRNA binding proteins, it binds directly to 16S rRNA where it nucleates assembly of the body of the 30S subunit. In terms of biological role, with S5 and S12 plays an important role in translational accuracy. This chain is Small ribosomal subunit protein uS4, found in Streptococcus pyogenes serotype M49 (strain NZ131).